Here is a 195-residue protein sequence, read N- to C-terminus: Myelin-associated neurite-outgrowth inhibitor (195 aa).

Topologically, residues M1–K18 are cytoplasmic. Residues G19–A43 traverse the membrane as a helical segment. The Extracellular portion of the chain corresponds to G44–G143. The helical transmembrane segment at V144–L162 threads the bilayer. Residues T163–W195 are Cytoplasmic-facing.

The protein belongs to the FAM168 family.

It is found in the cytoplasm. It localises to the perinuclear region. Its subcellular location is the cell membrane. The protein localises to the cell projection. The protein resides in the axon. In terms of biological role, inhibitor of neuronal axonal outgrowth. This is Myelin-associated neurite-outgrowth inhibitor (fam168b) from Xenopus tropicalis (Western clawed frog).